A 357-amino-acid polypeptide reads, in one-letter code: Dual-specificity RNA methyltransferase RlmN (357 aa).

Glutamate 89 serves as the catalytic Proton acceptor. Residues 109 to 340 form the Radical SAM core domain; the sequence is EGEKYTVCVS…CTIRESKALD (232 aa). An intrachain disulfide couples cysteine 116 to cysteine 345. [4Fe-4S] cluster-binding residues include cysteine 123, cysteine 127, and cysteine 130. S-adenosyl-L-methionine-binding positions include 173–174, serine 203, 226–228, and asparagine 302; these read GE and SLH. The S-methylcysteine intermediate role is filled by cysteine 345.

It belongs to the radical SAM superfamily. RlmN family. Requires [4Fe-4S] cluster as cofactor.

It localises to the cytoplasm. It carries out the reaction adenosine(2503) in 23S rRNA + 2 reduced [2Fe-2S]-[ferredoxin] + 2 S-adenosyl-L-methionine = 2-methyladenosine(2503) in 23S rRNA + 5'-deoxyadenosine + L-methionine + 2 oxidized [2Fe-2S]-[ferredoxin] + S-adenosyl-L-homocysteine. The catalysed reaction is adenosine(37) in tRNA + 2 reduced [2Fe-2S]-[ferredoxin] + 2 S-adenosyl-L-methionine = 2-methyladenosine(37) in tRNA + 5'-deoxyadenosine + L-methionine + 2 oxidized [2Fe-2S]-[ferredoxin] + S-adenosyl-L-homocysteine. Its function is as follows. Specifically methylates position 2 of adenine 2503 in 23S rRNA and position 2 of adenine 37 in tRNAs. m2A2503 modification seems to play a crucial role in the proofreading step occurring at the peptidyl transferase center and thus would serve to optimize ribosomal fidelity. The sequence is that of Dual-specificity RNA methyltransferase RlmN from Helicobacter pylori (strain J99 / ATCC 700824) (Campylobacter pylori J99).